The sequence spans 810 residues: Phenylalanine--tRNA ligase beta subunit (810 aa).

The tRNA-binding domain occupies 40–153 (KLPDQKVIVG…EACEIGQPLA (114 aa)). The B5 domain occupies 399–480 (AAQKIVSLRP…RLYGYNNLEP (82 aa)). Mg(2+)-binding residues include D458, D464, E467, and E468. Residues 714–808 (SKFPVVERDL…ARSELGAVIR (95 aa)) enclose the FDX-ACB domain.

This sequence belongs to the phenylalanyl-tRNA synthetase beta subunit family. Type 1 subfamily. In terms of assembly, tetramer of two alpha and two beta subunits. Requires Mg(2+) as cofactor.

The protein resides in the cytoplasm. The catalysed reaction is tRNA(Phe) + L-phenylalanine + ATP = L-phenylalanyl-tRNA(Phe) + AMP + diphosphate + H(+). In Chlorobaculum tepidum (strain ATCC 49652 / DSM 12025 / NBRC 103806 / TLS) (Chlorobium tepidum), this protein is Phenylalanine--tRNA ligase beta subunit.